The chain runs to 121 residues: Large ribosomal subunit protein bL21c (121 aa).

It belongs to the bacterial ribosomal protein bL21 family. In terms of assembly, part of the 50S ribosomal subunit.

The protein resides in the plastid. The protein localises to the chloroplast. Its function is as follows. This protein binds to 23S rRNA. The polypeptide is Large ribosomal subunit protein bL21c (Huperzia lucidula (Shining clubmoss)).